Reading from the N-terminus, the 209-residue chain is Imidazoleglycerol-phosphate dehydratase (209 aa).

It belongs to the imidazoleglycerol-phosphate dehydratase family.

It localises to the cytoplasm. It carries out the reaction D-erythro-1-(imidazol-4-yl)glycerol 3-phosphate = 3-(imidazol-4-yl)-2-oxopropyl phosphate + H2O. Its pathway is amino-acid biosynthesis; L-histidine biosynthesis; L-histidine from 5-phospho-alpha-D-ribose 1-diphosphate: step 6/9. This is Imidazoleglycerol-phosphate dehydratase from Microcystis aeruginosa (strain NIES-843 / IAM M-2473).